Consider the following 1015-residue polypeptide: Formate dehydrogenase, nitrate-inducible, major subunit (1015 aa).

A signal peptide (tat-type signal) is located at residues 1-33 (MDVSRRQFFKICAGGMAGTTVAALGFAPKQALA). The region spanning 43–106 (AKEIRNTCTY…GLLDYVNSEN (64 aa)) is the 4Fe-4S Mo/W bis-MGD-type domain. [4Fe-4S] cluster is bound by residues cysteine 50, cysteine 53, cysteine 57, and cysteine 92. Residue selenocysteine 196 coordinates Mo-bis(molybdopterin guanine dinucleotide). Position 196 (selenocysteine 196) is a non-standard amino acid, selenocysteine.

This sequence belongs to the prokaryotic molybdopterin-containing oxidoreductase family. In terms of assembly, trimer of heterotrimers, consisting of subunits alpha, beta and gamma. Requires Mo-bis(molybdopterin guanine dinucleotide) as cofactor. [4Fe-4S] cluster serves as cofactor. Exported by the Tat system. The position of the signal peptide cleavage has not been experimentally proven.

The protein localises to the periplasm. It catalyses the reaction a quinone + formate + H(+) = a quinol + CO2. In terms of biological role, formate dehydrogenase allows E.coli to use formate as major electron donor during anaerobic respiration, when nitrate is used as electron acceptor. The alpha subunit FdnG contains the formate oxidation site. Electrons are transferred from formate to menaquinone in the gamma subunit (FdnI), through the 4Fe-4S clusters in the beta subunit (FdnH). Formate dehydrogenase-N is part of a system that generates proton motive force, together with the dissimilatory nitrate reductase (Nar). The chain is Formate dehydrogenase, nitrate-inducible, major subunit (fdnG) from Escherichia coli (strain K12).